The following is a 354-amino-acid chain: MGCTLSAEDKAAVERSKMIDRNLREDGEKAAREVKLLLLGAGESGKSTIVKQMKIIHEAGYSEEECKQYKAVVYSNTIQSIIAIIRAMGRLKIDFGDPSRADDARQLFVLAGAAEEGFMTAELAGVIKRLWKDGGVQACFNRSREYQLNDSAAYYLNDLDRIAQNSYIPTQQDVLRTRVKTTGIVETHFTFKDLHFKMFDVGGQRSERKKWIHCFEGVTAIIFCVALSDYDLVLAEDEEMNRMHESMKLFDSICNNKWFTDTSIILFLNKKDLFEEKIKRSPLTICYPEYPGSNTYEEAAAYIQCQFEDLNKRKDTKEIYTHFTCATDTKNVQFVFDAVTDVIIKNNLKDCGLF.

A lipid anchor (N-myristoyl glycine) is attached at Gly2. The S-palmitoyl cysteine moiety is linked to residue Cys3. The region spanning 32-354 (REVKLLLLGA…KNNLKDCGLF (323 aa)) is the G-alpha domain. Positions 35 to 48 (KLLLLGAGESGKST) are G1 motif. Residues 43–48 (ESGKST), 150–151 (DS), and 175–178 (LRTR) each bind GTP. Ser47 contacts Mg(2+). The G2 motif stretch occupies residues 173–181 (DVLRTRVKT). Residue Thr181 participates in Mg(2+) binding. The segment at 196–205 (FKMFDVGGQR) is G3 motif. GTP contacts are provided by residues 200–204 (DVGGQ), 269–272 (NKKD), and Ala326. The G4 motif stretch occupies residues 265–272 (ILFLNKKD). A G5 motif region spans residues 324-329 (TCATDT).

It belongs to the G-alpha family. G(i/o/t/z) subfamily. Heterotrimeric G proteins are composed of 3 units; alpha, beta and gamma. The alpha chain contains the guanine nucleotide binding site. Part of a spindle orientation complex. Identified in complex with the beta subunit GNB1 and the gamma subunit GNG1. Identified in complex with the beta subunit GNB1 and the gamma subunit GNG2. GTP binding causes dissociation of the heterotrimer, liberating the individual subunits so that they can interact with downstream effector proteins. Post-translationally, myristoylation at Gly-2 is required for membrane anchoring before palmitoylation. In terms of processing, palmitoylation at Cys-3 varies with membrane lipid composition.

Its subcellular location is the nucleus. The protein resides in the cytoplasm. It is found in the cell membrane. The protein localises to the cytoskeleton. It localises to the microtubule organizing center. Its subcellular location is the centrosome. The protein resides in the cell cortex. It is found in the membrane. The catalysed reaction is GTP + H2O = GDP + phosphate + H(+). Guanine nucleotide-binding proteins (G proteins) function as transducers downstream of G protein-coupled receptors (GPCRs) in numerous signaling cascades. The alpha chain contains the guanine nucleotide binding site and alternates between an active, GTP-bound state and an inactive, GDP-bound state. Signaling by an activated GPCR promotes GDP release and GTP binding. The alpha subunit has a low GTPase activity that converts bound GTP to GDP, thereby terminating the signal. Both GDP release and GTP hydrolysis are modulated by numerous regulatory proteins. Signaling is mediated via effector proteins, such as adenylate cyclase. Inhibits adenylate cyclase activity, leading to decreased intracellular cAMP levels. Required for cortical dynein-dynactin complex recruitment during metaphase. This chain is Guanine nucleotide-binding protein G(i) subunit alpha-1 (gnai1), found in Xenopus laevis (African clawed frog).